Here is a 241-residue protein sequence, read N- to C-terminus: Uridylate kinase (241 aa).

12 to 15 (KLSG) provides a ligand contact to ATP. The involved in allosteric activation by GTP stretch occupies residues 20 to 25 (GDKGVG). G54 provides a ligand contact to UMP. Positions 55 and 59 each coordinate ATP. UMP-binding positions include D74 and 135 to 142 (IGSPYFST). The ATP site is built by N163, Y169, and D172.

This sequence belongs to the UMP kinase family. In terms of assembly, homohexamer.

It is found in the cytoplasm. It catalyses the reaction UMP + ATP = UDP + ADP. The protein operates within pyrimidine metabolism; CTP biosynthesis via de novo pathway; UDP from UMP (UMPK route): step 1/1. Allosterically activated by GTP. Inhibited by UTP. Functionally, catalyzes the reversible phosphorylation of UMP to UDP. The polypeptide is Uridylate kinase (Streptococcus gordonii (strain Challis / ATCC 35105 / BCRC 15272 / CH1 / DL1 / V288)).